A 248-amino-acid chain; its full sequence is Small ribosomal subunit protein uS3 (248 aa).

A KH type-2 domain is found at 39 to 108 (IRKLVDKKLS…TVAVNVAEIP (70 aa)). Residues 214–248 (ETIARPQRRNDERRPEGGDRANRRRPTARRRAGGE) form a disordered region. A compositionally biased stretch (basic and acidic residues) spans 221–234 (RRNDERRPEGGDRA). Residues 235–248 (NRRRPTARRRAGGE) show a composition bias toward basic residues.

It belongs to the universal ribosomal protein uS3 family. As to quaternary structure, part of the 30S ribosomal subunit. Forms a tight complex with proteins S10 and S14.

Functionally, binds the lower part of the 30S subunit head. Binds mRNA in the 70S ribosome, positioning it for translation. The protein is Small ribosomal subunit protein uS3 of Deinococcus deserti (strain DSM 17065 / CIP 109153 / LMG 22923 / VCD115).